The primary structure comprises 184 residues: Transcription termination/antitermination protein NusG (184 aa).

It belongs to the NusG family.

Participates in transcription elongation, termination and antitermination. The protein is Transcription termination/antitermination protein NusG of Borreliella burgdorferi (strain ATCC 35210 / DSM 4680 / CIP 102532 / B31) (Borrelia burgdorferi).